Consider the following 280-residue polypeptide: Urease accessory protein UreD (280 aa).

The protein belongs to the UreD family. As to quaternary structure, ureD, UreF and UreG form a complex that acts as a GTP-hydrolysis-dependent molecular chaperone, activating the urease apoprotein by helping to assemble the nickel containing metallocenter of UreC. The UreE protein probably delivers the nickel.

It localises to the cytoplasm. In terms of biological role, required for maturation of urease via the functional incorporation of the urease nickel metallocenter. This chain is Urease accessory protein UreD, found in Mesorhizobium japonicum (strain LMG 29417 / CECT 9101 / MAFF 303099) (Mesorhizobium loti (strain MAFF 303099)).